A 586-amino-acid chain; its full sequence is Aspartate--tRNA(Asp/Asn) ligase (586 aa).

Glutamate 175 contacts L-aspartate. The interval 199 to 202 (QIFK) is aspartate. Arginine 221 serves as a coordination point for L-aspartate. Residues 221-223 (RDE) and glutamine 230 each bind ATP. L-aspartate is bound at residue histidine 448. Glutamate 482 lines the ATP pocket. Arginine 489 provides a ligand contact to L-aspartate. Position 534–537 (534–537 (GVDR)) interacts with ATP.

Belongs to the class-II aminoacyl-tRNA synthetase family. Type 1 subfamily. In terms of assembly, homodimer.

The protein resides in the cytoplasm. It carries out the reaction tRNA(Asx) + L-aspartate + ATP = L-aspartyl-tRNA(Asx) + AMP + diphosphate. Aspartyl-tRNA synthetase with relaxed tRNA specificity since it is able to aspartylate not only its cognate tRNA(Asp) but also tRNA(Asn). Reaction proceeds in two steps: L-aspartate is first activated by ATP to form Asp-AMP and then transferred to the acceptor end of tRNA(Asp/Asn). The polypeptide is Aspartate--tRNA(Asp/Asn) ligase (Syntrophomonas wolfei subsp. wolfei (strain DSM 2245B / Goettingen)).